A 45-amino-acid polypeptide reads, in one-letter code: Photosystem II reaction center protein K (45 aa).

Residues 1–8 (MEAALLLA) constitute a propeptide that is removed on maturation. A helical transmembrane segment spans residues 24–44 (LPIIPVFFLLLAFVWQAAVGF).

It belongs to the PsbK family. In terms of assembly, PSII is composed of 1 copy each of membrane proteins PsbA, PsbB, PsbC, PsbD, PsbE, PsbF, PsbH, PsbI, PsbJ, PsbK, PsbL, PsbM, PsbT, PsbX, PsbY, PsbZ, Psb30/Ycf12, peripheral proteins PsbO, CyanoQ (PsbQ), PsbU, PsbV and a large number of cofactors. It forms dimeric complexes.

The protein localises to the cellular thylakoid membrane. Its function is as follows. One of the components of the core complex of photosystem II (PSII). PSII is a light-driven water:plastoquinone oxidoreductase that uses light energy to abstract electrons from H(2)O, generating O(2) and a proton gradient subsequently used for ATP formation. It consists of a core antenna complex that captures photons, and an electron transfer chain that converts photonic excitation into a charge separation. The protein is Photosystem II reaction center protein K of Nostoc sp. (strain PCC 7120 / SAG 25.82 / UTEX 2576).